The chain runs to 535 residues: CTP synthase (535 aa).

One can recognise a Glutamine amidotransferase type-1 domain in the interval Arg-300–Lys-535. Residues Cys-385, His-509, and Glu-511 each act as for GATase activity in the active site.

Belongs to the CTP synthase family.

It catalyses the reaction UTP + L-glutamine + ATP + H2O = CTP + L-glutamate + ADP + phosphate + 2 H(+). Its pathway is pyrimidine metabolism; CTP biosynthesis via de novo pathway; CTP from UDP: step 2/2. Its function is as follows. Catalyzes the ATP-dependent amination of UTP to CTP with either L-glutamine or ammonia as the source of nitrogen. The protein is CTP synthase of Encephalitozoon cuniculi (strain GB-M1) (Microsporidian parasite).